Here is a 222-residue protein sequence, read N- to C-terminus: MTNNQFSEDTKKIADQIKDALMGISDDLVLESKEVEEIFEELSQNEEFEYEMERMLSILNEQTMDLTQLQSRIILLIRKYLGKTKNLKLKMLKMDEKLINKNVAEVSNYLMHQHSKIVRDANKNLTNPKDKLQGLTKQARIDLKRLLKSFAVYQIYMFMNPKRIAGETKLMNFAYNMIKGGMKLAKKYEGGKEQEIKSYSPRLIKKLKKAHVGFKKSGGISI.

The stretch at 43–73 (SQNEEFEYEMERMLSILNEQTMDLTQLQSRI) forms a coiled coil.

This is an uncharacterized protein from Rickettsia conorii (strain ATCC VR-613 / Malish 7).